Consider the following 65-residue polypeptide: MPKLKTSKAIAKRFKVSSSGKFLRHKASKSHLLQKKSSKQRRHLSSTCSVDLKDIKNIAMQLPYL.

The span at His-25–Leu-44 shows a compositional bias: basic residues. A disordered region spans residues His-25–Ser-45.

This sequence belongs to the bacterial ribosomal protein bL35 family.

The protein localises to the plastid. Its subcellular location is the chloroplast. This is Large ribosomal subunit protein bL35c from Pyropia yezoensis (Susabi-nori).